A 218-amino-acid polypeptide reads, in one-letter code: UPF0758 protein SAUSA300_1608 (218 aa).

Positions Lys92–Phe214 constitute an MPN domain. Zn(2+)-binding residues include His163, His165, and Asp176. Residues His163 to Asp176 carry the JAMM motif motif.

The protein belongs to the UPF0758 family.

The polypeptide is UPF0758 protein SAUSA300_1608 (Staphylococcus aureus (strain USA300)).